Here is an 853-residue protein sequence, read N- to C-terminus: NADH-quinone oxidoreductase subunit G 2 (853 aa).

The 2Fe-2S ferredoxin-type domain maps to 1–78; it reads MIKVTIDEQS…GMVVRTNTPL (78 aa). 4 residues coordinate [2Fe-2S] cluster: cysteine 34, cysteine 45, cysteine 48, and cysteine 62. Residues 78 to 117 enclose the 4Fe-4S His(Cys)3-ligated-type domain; it reads LIEETRSSMLDMLLANHPLDCPICDKGGECELQDMVMAYG. Residues histidine 94, cysteine 98, cysteine 101, cysteine 107, cysteine 148, cysteine 151, cysteine 154, cysteine 198, cysteine 224, cysteine 227, cysteine 231, and cysteine 259 each contribute to the [4Fe-4S] cluster site. 4Fe-4S ferredoxin-type domains follow at residues 139-170 and 179-209; these read PVII…LGTV and TGFE…FPYR. A 4Fe-4S Mo/W bis-MGD-type domain is found at 217–273; it reads LAETDTICPHCGTGCQLTVGARKGEFMRVRSDWEHGVNRETLCVRGRFGLDFIESRD.

The protein belongs to the complex I 75 kDa subunit family. It depends on [2Fe-2S] cluster as a cofactor. [4Fe-4S] cluster is required as a cofactor.

The enzyme catalyses a quinone + NADH + 5 H(+)(in) = a quinol + NAD(+) + 4 H(+)(out). In terms of biological role, NDH-1 shuttles electrons from NADH, via FMN and iron-sulfur (Fe-S) centers, to quinones in the respiratory chain. The immediate electron acceptor for the enzyme in this species is believed to be ubiquinone. Couples the redox reaction to proton translocation (for every two electrons transferred, four hydrogen ions are translocated across the cytoplasmic membrane), and thus conserves the redox energy in a proton gradient. In Rhizobium meliloti (strain 1021) (Ensifer meliloti), this protein is NADH-quinone oxidoreductase subunit G 2 (nuoG2).